Consider the following 585-residue polypeptide: Trehalase (585 aa).

Positions 1–32 (MAKTTPMAKPSVGLLTLQVLVFCALTGSLASA) are cleaved as a signal peptide. Substrate-binding positions include arginine 184 and 191-192 (WD). A glycan (N-linked (GlcNAc...) asparagine) is linked at asparagine 207. Substrate is bound by residues asparagine 228, 237-239 (RSQ), 302-304 (RPE), and glycine 336. Residue aspartate 338 is the Proton donor/acceptor of the active site. Residue asparagine 348 is glycosylated (N-linked (GlcNAc...) asparagine). Glutamate 535 functions as the Proton donor/acceptor in the catalytic mechanism. Position 550 (glutamate 550) interacts with substrate.

It belongs to the glycosyl hydrolase 37 family. As to expression, expressed by the venom gland.

Its subcellular location is the secreted. It carries out the reaction alpha,alpha-trehalose + H2O = alpha-D-glucose + beta-D-glucose. The polypeptide is Trehalase (tre1) (Pimpla hypochondriaca (Parasitoid wasp)).